The sequence spans 130 residues: Ribosome-binding factor A (130 aa).

Residues 111–130 (RDLDDVGPEATSSDEDAEQR) are disordered.

This sequence belongs to the RbfA family. Monomer. Binds 30S ribosomal subunits, but not 50S ribosomal subunits or 70S ribosomes.

The protein resides in the cytoplasm. Functionally, one of several proteins that assist in the late maturation steps of the functional core of the 30S ribosomal subunit. Associates with free 30S ribosomal subunits (but not with 30S subunits that are part of 70S ribosomes or polysomes). Required for efficient processing of 16S rRNA. May interact with the 5'-terminal helix region of 16S rRNA. The chain is Ribosome-binding factor A from Xanthomonas euvesicatoria pv. vesicatoria (strain 85-10) (Xanthomonas campestris pv. vesicatoria).